Reading from the N-terminus, the 237-residue chain is MKHSYFISDLHLSETQPELTALFVDFMQNLAPQAERLYILGDLFDFWIGDDEQSTLIQQVKDLIKSVSNQGVQCYFQHGNRDFLIGERFSKETGAQLLPDYQLITLYDKKILLCHGDTLCIDDVAYQQFRRRVHQKWLQRLFLCLPLKVRLKIAEKIRAKSNQDKQAKSQEIMDINQAFTTEKVQEFGVNLLIHGHTHREAIHQQEGFTRIVLGDWRKNYASILKMDESGEFGFIKD.

Residues Asp-9, His-11, Asp-42, Asn-80, and His-115 each contribute to the Mn(2+) site. 80 to 81 (NR) contacts substrate. Residues Asp-123, Ser-161, Lys-165, Lys-168, and His-196 each contribute to the substrate site. The Mn(2+) site is built by His-196 and His-198.

It belongs to the LpxH family. Mn(2+) is required as a cofactor.

It localises to the cell inner membrane. It catalyses the reaction UDP-2-N,3-O-bis[(3R)-3-hydroxytetradecanoyl]-alpha-D-glucosamine + H2O = 2-N,3-O-bis[(3R)-3-hydroxytetradecanoyl]-alpha-D-glucosaminyl 1-phosphate + UMP + 2 H(+). The protein operates within glycolipid biosynthesis; lipid IV(A) biosynthesis; lipid IV(A) from (3R)-3-hydroxytetradecanoyl-[acyl-carrier-protein] and UDP-N-acetyl-alpha-D-glucosamine: step 4/6. Hydrolyzes the pyrophosphate bond of UDP-2,3-diacylglucosamine to yield 2,3-diacylglucosamine 1-phosphate (lipid X) and UMP by catalyzing the attack of water at the alpha-P atom. Involved in the biosynthesis of lipid A, a phosphorylated glycolipid that anchors the lipopolysaccharide to the outer membrane of the cell. The sequence is that of UDP-2,3-diacylglucosamine hydrolase from Haemophilus influenzae (strain PittGG).